Reading from the N-terminus, the 405-residue chain is Chorismate synthase (405 aa).

NADP(+)-binding residues include Arg43 and Arg49. FMN contacts are provided by residues 138-140 and 259-260; these read RAS and QA. The segment covering 275 to 286 has biased composition (basic and acidic residues); it reads RRGSQAHDEMRP. The disordered stretch occupies residues 275–308; it reads RRGSQAHDEMRPGPDGVLRSTNRAGGLEGGMTNG. FMN is bound by residues Gly303, 318-322, and Arg344; that span reads KPIST.

Belongs to the chorismate synthase family. As to quaternary structure, homotetramer. FMNH2 serves as cofactor.

It catalyses the reaction 5-O-(1-carboxyvinyl)-3-phosphoshikimate = chorismate + phosphate. The protein operates within metabolic intermediate biosynthesis; chorismate biosynthesis; chorismate from D-erythrose 4-phosphate and phosphoenolpyruvate: step 7/7. Functionally, catalyzes the anti-1,4-elimination of the C-3 phosphate and the C-6 proR hydrogen from 5-enolpyruvylshikimate-3-phosphate (EPSP) to yield chorismate, which is the branch point compound that serves as the starting substrate for the three terminal pathways of aromatic amino acid biosynthesis. This reaction introduces a second double bond into the aromatic ring system. This Nocardia farcinica (strain IFM 10152) protein is Chorismate synthase.